Reading from the N-terminus, the 77-residue chain is Small ribosomal subunit protein bS20 (77 aa).

This sequence belongs to the bacterial ribosomal protein bS20 family.

In terms of biological role, binds directly to 16S ribosomal RNA. This chain is Small ribosomal subunit protein bS20, found in Streptococcus uberis (strain ATCC BAA-854 / 0140J).